The primary structure comprises 710 residues: Bifunctional sesterterpene synthase (710 aa).

A stellata-2,6,19-trien synthase region spans residues 1-327; it reads MEFKFSAVVD…RYYTDASFSE (327 aa). 2 residues coordinate Mg(2+): D92 and D96. Residues D92, D96, 181 to 184, and 229 to 233 contribute to the substrate site; these read RVHD and SWDKE. Residues 92–96 carry the DDXXD motif 1 motif; sequence DDVTD. The NSE motif motif lies at 278–286; that stretch reads YLRVFEEVK. 318–319 is a substrate binding site; it reads RY. Residues 328-709 form a geranylgeranyl diphosphate synthase region; the sequence is RQLEWMKNGI…LRLIFELLRN (382 aa). Positions 365–404 are disordered; the sequence is HHAVTSNGTGTGSHDTLNGDGTAHENNSRDASIPGRTTNG. A compositionally biased stretch (polar residues) spans 368 to 380; it reads VTSNGTGTGSHDT. Residues K430, R433, and H462 each coordinate isopentenyl diphosphate. Mg(2+)-binding residues include D469 and D473. The DDXXD motif 2 signature appears at 469–473; sequence DDLED. R478 lines the dimethylallyl diphosphate pocket. Residue R479 coordinates isopentenyl diphosphate. Positions 556, 557, 592, 599, 609, and 619 each coordinate dimethylallyl diphosphate.

It in the C-terminal section; belongs to the FPP/GGPP synthase family. In the N-terminal section; belongs to the terpene synthase family. Hexamer.

It catalyses the reaction 4 isopentenyl diphosphate + dimethylallyl diphosphate = (2E,6E,10E,14E)-geranylfarnesyl diphosphate + 4 diphosphate. It carries out the reaction (2E,6E,10E,14E)-geranylfarnesyl diphosphate = variecoladiene + diphosphate. It participates in secondary metabolite biosynthesis; terpenoid biosynthesis. Multifunctional sesterterpene synthase; part of the gene cluster that mediates the biosynthesis of the sesterterpene variecolin. The first step in the pathway is performed by the variecoladiene synthase vrcA that possesses both prenyl transferase and terpene cyclase activity, converting isopentenyl diphosphate and dimethylallyl diphosphate into geranylfarnesyl pyrophosphate (GFPP) and then converting GFPP into the tetracyclic variecoladiene. The cytochrome P450 monooxygenase vrcB then catalyzes multiple oxidations at C-5 and C-20 positions to yield variecolin. The polypeptide is Bifunctional sesterterpene synthase (Aspergillus aculeatus (strain ATCC 16872 / CBS 172.66 / WB 5094)).